Reading from the N-terminus, the 182-residue chain is Large ribosomal subunit protein uL16 (182 aa).

It belongs to the universal ribosomal protein uL16 family.

The sequence is that of Large ribosomal subunit protein uL16 from Pyrobaculum arsenaticum (strain DSM 13514 / JCM 11321 / PZ6).